Reading from the N-terminus, the 366-residue chain is tRNA(Met) cytidine acetate ligase (366 aa).

Residues 7–20 (VAEF…HKYL), glycine 96, asparagine 152, and arginine 175 each bind ATP.

This sequence belongs to the TmcAL family.

It localises to the cytoplasm. It carries out the reaction cytidine(34) in elongator tRNA(Met) + acetate + ATP = N(4)-acetylcytidine(34) in elongator tRNA(Met) + AMP + diphosphate. Catalyzes the formation of N(4)-acetylcytidine (ac(4)C) at the wobble position of elongator tRNA(Met), using acetate and ATP as substrates. First activates an acetate ion to form acetyladenylate (Ac-AMP) and then transfers the acetyl group to tRNA to form ac(4)C34. This is tRNA(Met) cytidine acetate ligase from Streptococcus uberis (strain ATCC BAA-854 / 0140J).